The following is a 62-amino-acid chain: Large ribosomal subunit protein bL28 (62 aa).

The tract at residues 1–27 is disordered; the sequence is MAKECVITGRKSRSGNKRSHAMNSSKR. Residues 10 to 20 are compositionally biased toward basic residues; the sequence is RKSRSGNKRSH.

This sequence belongs to the bacterial ribosomal protein bL28 family.

This is Large ribosomal subunit protein bL28 from Listeria innocua serovar 6a (strain ATCC BAA-680 / CLIP 11262).